Consider the following 380-residue polypeptide: Cytochrome b (380 aa).

4 consecutive transmembrane segments (helical) span residues 34 to 54 (FGSL…LLAT), 78 to 99 (WLIR…YLHI), 114 to 134 (WNTG…GYVL), and 179 to 199 (FFAL…IHLT). The heme b site is built by H84 and H98. Heme b-binding residues include H183 and H197. H202 serves as a coordination point for a ubiquinone. 4 helical membrane-spanning segments follow: residues 227–247 (LKDT…ALFS), 289–309 (LGGV…PLLH), 321–341 (FSQF…WVGS), and 348–368 (FIII…ILLP).

Belongs to the cytochrome b family. In terms of assembly, the cytochrome bc1 complex contains 11 subunits: 3 respiratory subunits (MT-CYB, CYC1 and UQCRFS1), 2 core proteins (UQCRC1 and UQCRC2) and 6 low-molecular weight proteins (UQCRH/QCR6, UQCRB/QCR7, UQCRQ/QCR8, UQCR10/QCR9, UQCR11/QCR10 and a cleavage product of UQCRFS1). This cytochrome bc1 complex then forms a dimer. Requires heme b as cofactor.

The protein resides in the mitochondrion inner membrane. Functionally, component of the ubiquinol-cytochrome c reductase complex (complex III or cytochrome b-c1 complex) that is part of the mitochondrial respiratory chain. The b-c1 complex mediates electron transfer from ubiquinol to cytochrome c. Contributes to the generation of a proton gradient across the mitochondrial membrane that is then used for ATP synthesis. This chain is Cytochrome b (MT-CYB), found in Garrodia nereis (Grey-backed storm-petrel).